We begin with the raw amino-acid sequence, 526 residues long: Bifunctional purine biosynthesis protein PurH (526 aa).

Residues 1–148 (MSLNNIIKNA…KNYKDVIVIV (148 aa)) enclose the MGS-like domain.

It belongs to the PurH family.

It catalyses the reaction (6R)-10-formyltetrahydrofolate + 5-amino-1-(5-phospho-beta-D-ribosyl)imidazole-4-carboxamide = 5-formamido-1-(5-phospho-D-ribosyl)imidazole-4-carboxamide + (6S)-5,6,7,8-tetrahydrofolate. It carries out the reaction IMP + H2O = 5-formamido-1-(5-phospho-D-ribosyl)imidazole-4-carboxamide. It participates in purine metabolism; IMP biosynthesis via de novo pathway; 5-formamido-1-(5-phospho-D-ribosyl)imidazole-4-carboxamide from 5-amino-1-(5-phospho-D-ribosyl)imidazole-4-carboxamide (10-formyl THF route): step 1/1. It functions in the pathway purine metabolism; IMP biosynthesis via de novo pathway; IMP from 5-formamido-1-(5-phospho-D-ribosyl)imidazole-4-carboxamide: step 1/1. The protein is Bifunctional purine biosynthesis protein PurH of Buchnera aphidicola subsp. Schizaphis graminum (strain Sg).